A 141-amino-acid chain; its full sequence is Hemoglobin subunit alpha-D (141 aa).

Residues 1–141 (MLNHDEKQLI…VSAVLAEKYR (141 aa)) form the Globin domain. His-58 and His-87 together coordinate heme b.

The protein belongs to the globin family. Heterotetramer of two alpha-D chains and two beta chains. Red blood cells.

Involved in oxygen transport from the lung to the various peripheral tissues. The chain is Hemoglobin subunit alpha-D (HBAD) from Chrysemys picta bellii (Western painted turtle).